We begin with the raw amino-acid sequence, 482 residues long: GPI mannosyltransferase 3 (482 aa).

The helical transmembrane segment at 12–32 (LFAFIFIFRLANSFAIETFFQ) threads the bilayer. An N-linked (GlcNAc...) asparagine glycan is attached at Asn80. The next 4 membrane-spanning stretches (helical) occupy residues 114–134 (KLAWITLMLSLFNPFNWYVIT), 137–155 (FSNNLEMVFTVLALRFWPW), 175–195 (IIRPTNILIWIPLGIWLLISI), and 199–219 (LKWVALSFLEVVLILLINTAL). An N-linked (GlcNAc...) asparagine glycan is attached at Asn242. The next 3 membrane-spanning stretches (helical) occupy residues 252-272 (WHFYIFQAIPLMLMLYLPLMI), 274-294 (GLKKNILLLTGLFYIIGFSLI), and 324-344 (FVLIGILLNICIGLFFTNVHE).

This sequence belongs to the glycosyltransferase 22 family. PIGB subfamily.

The protein localises to the endoplasmic reticulum membrane. Its pathway is glycolipid biosynthesis; glycosylphosphatidylinositol-anchor biosynthesis. In terms of biological role, mannosyltransferase involved in glycosylphosphatidylinositol-anchor biosynthesis. Transfers the third mannose to Man2-GlcN-acyl-PI during GPI precursor assembly. The polypeptide is GPI mannosyltransferase 3 (GPI10) (Candida albicans (strain SC5314 / ATCC MYA-2876) (Yeast)).